Reading from the N-terminus, the 125-residue chain is Ribonuclease P protein component (125 aa).

Belongs to the RnpA family. Consists of a catalytic RNA component (M1 or rnpB) and a protein subunit.

It carries out the reaction Endonucleolytic cleavage of RNA, removing 5'-extranucleotides from tRNA precursor.. Its function is as follows. RNaseP catalyzes the removal of the 5'-leader sequence from pre-tRNA to produce the mature 5'-terminus. It can also cleave other RNA substrates such as 4.5S RNA. The protein component plays an auxiliary but essential role in vivo by binding to the 5'-leader sequence and broadening the substrate specificity of the ribozyme. The chain is Ribonuclease P protein component from Clostridium perfringens (strain ATCC 13124 / DSM 756 / JCM 1290 / NCIMB 6125 / NCTC 8237 / Type A).